Here is a 347-residue protein sequence, read N- to C-terminus: Sulfate/thiosulfate import ATP-binding protein CysA 1 (347 aa).

Residues 3–237 form the ABC transporter domain; the sequence is VRVESLRKEF…PVSPFVYGFI (235 aa). Position 35–42 (35–42) interacts with ATP; that stretch reads GPSGSGKT.

The protein belongs to the ABC transporter superfamily. Sulfate/tungstate importer (TC 3.A.1.6) family. As to quaternary structure, the complex is composed of two ATP-binding proteins (CysA), two transmembrane proteins (CysT and CysW) and a solute-binding protein (CysP).

It localises to the cell inner membrane. The catalysed reaction is sulfate(out) + ATP + H2O = sulfate(in) + ADP + phosphate + H(+). It carries out the reaction thiosulfate(out) + ATP + H2O = thiosulfate(in) + ADP + phosphate + H(+). Part of the ABC transporter complex CysAWTP involved in sulfate/thiosulfate import. Responsible for energy coupling to the transport system. The protein is Sulfate/thiosulfate import ATP-binding protein CysA 1 of Rhizobium meliloti (strain 1021) (Ensifer meliloti).